The chain runs to 609 residues: Aminopeptidase ltah-1.1 (609 aa).

Residues 137 to 139 (QCQ) and 268 to 273 (PFGGME) each bind substrate. Position 297 (H297) interacts with Zn(2+). Residue E298 is the Proton acceptor of the active site. 2 residues coordinate Zn(2+): H301 and E320. The Proton donor role is filled by Y387. 564 to 566 (RMK) is a substrate binding site.

Belongs to the peptidase M1 family. Requires Zn(2+) as cofactor.

It is found in the cytoplasm. It catalyses the reaction Release of N-terminal Arg and Lys from oligopeptides when P1' is not Pro. Also acts on arylamides of Arg and Lys.. In terms of biological role, aminopeptidase which preferentially removes N-terminal Arg and Lys residues from peptides and proteins. In Caenorhabditis elegans, this protein is Aminopeptidase ltah-1.1.